The following is a 452-amino-acid chain: MFKSSKFKGKKACVLGMGKSGLAAARLLAENGFSVLISDGGKREIPGNLHKNIEVETGGHTNKILDCGFIVKSPGISSNMPVLKKIKNKKIPIFSEIEISISFLPKGCRIFAVTGTNGKTTTTMLLSEILKQFIKNKEFNKNVFTVGNIGCPLAEVMSEIKQHDLIVMEVSSYQLEDSSYFKPYAATILNITPDHIDHHGSFKKYLDAKSKIFKFQTQKDIAVINSADKNCLKAAKNIKSKLYGFATTPLQQIRSHVFYDGDELVFSAGERISPPKLPGIHNVENAMAASLLALAAGVDSQSIQQAFNKFKTVEHRIELLGIKKGISFINDSKATNIDSTIIALRSMPDGKKTWLILGGQDKGSPYGVLLPLLETKCKKVLLVGQAAAKIKKDLPGYKYFNVCGTIDKAVEYAFNNAQKEDIILLSPACASFDQFNNFEERGKFFKQIYKSL.

Position 115 to 121 (115 to 121 (GTNGKTT)) interacts with ATP.

This sequence belongs to the MurCDEF family.

It localises to the cytoplasm. It carries out the reaction UDP-N-acetyl-alpha-D-muramoyl-L-alanine + D-glutamate + ATP = UDP-N-acetyl-alpha-D-muramoyl-L-alanyl-D-glutamate + ADP + phosphate + H(+). Its pathway is cell wall biogenesis; peptidoglycan biosynthesis. Cell wall formation. Catalyzes the addition of glutamate to the nucleotide precursor UDP-N-acetylmuramoyl-L-alanine (UMA). The chain is UDP-N-acetylmuramoylalanine--D-glutamate ligase from Elusimicrobium minutum (strain Pei191).